A 340-amino-acid polypeptide reads, in one-letter code: ATP synthase subunit a (340 aa).

Positions 1 to 32 are cleaved as a signal peptide; the sequence is MKRVNVIQAKAFLKVIALLVPLLLNANGPAFA. The next 6 membrane-spanning stretches (helical) occupy residues 107 to 127, 172 to 192, 197 to 217, 236 to 256, 269 to 289, and 296 to 316; these read HVVM…LVGS, LLTV…PYGA, NINV…VAAL, ALWI…PVAL, IVIL…VAVV, and IFIY…FTML.

The protein belongs to the ATPase A chain family. F-type ATPases have 2 components, CF(1) - the catalytic core - and CF(0) - the membrane proton channel. CF(1) has five subunits: alpha(3), beta(3), gamma(1), delta(1), epsilon(1). CF(0) has four main subunits: a, b, b' and c.

The protein resides in the cell inner membrane. In terms of biological role, key component of the proton channel; it plays a direct role in the translocation of protons across the membrane. The chain is ATP synthase subunit a from Pelodictyon phaeoclathratiforme (strain DSM 5477 / BU-1).